A 355-amino-acid chain; its full sequence is Probable nitronate monooxygenase (355 aa).

FMN is bound by residues Asn-71, Gln-175, Gly-180, Gly-218, and 237 to 240 (QMGT).

Belongs to the nitronate monooxygenase family. NMO class I subfamily. The cofactor is FMN.

It carries out the reaction 3 propionate 3-nitronate + 3 O2 + H2O = 3 3-oxopropanoate + 2 nitrate + nitrite + H2O2 + 3 H(+). Its function is as follows. Nitronate monooxygenase that uses molecular oxygen to catalyze the oxidative denitrification of alkyl nitronates. Acts on propionate 3-nitronate (P3N), the presumed physiological substrate. Probably functions in the detoxification of P3N, a metabolic poison produced by plants and fungi as a defense mechanism. The protein is Probable nitronate monooxygenase of Staphylococcus aureus (strain USA300).